A 754-amino-acid polypeptide reads, in one-letter code: 5-methyltetrahydropteroyltriglutamate--homocysteine methyltransferase (754 aa).

5-methyltetrahydropteroyltri-L-glutamate contacts are provided by residues Arg-15 to Lys-18 and Lys-114. Residues Ile-430–Ser-432 and Glu-483 contribute to the L-homocysteine site. L-methionine contacts are provided by residues Ile-430–Ser-432 and Glu-483. 5-methyltetrahydropteroyltri-L-glutamate-binding positions include Arg-514 to Cys-515 and Trp-560. Asp-598 provides a ligand contact to L-homocysteine. L-methionine is bound at residue Asp-598. Residue Glu-604 coordinates 5-methyltetrahydropteroyltri-L-glutamate. His-641, Cys-643, and Glu-665 together coordinate Zn(2+). The Proton donor role is filled by His-694. Cys-726 serves as a coordination point for Zn(2+).

This sequence belongs to the vitamin-B12 independent methionine synthase family. The cofactor is Zn(2+).

It carries out the reaction 5-methyltetrahydropteroyltri-L-glutamate + L-homocysteine = tetrahydropteroyltri-L-glutamate + L-methionine. Its pathway is amino-acid biosynthesis; L-methionine biosynthesis via de novo pathway; L-methionine from L-homocysteine (MetE route): step 1/1. In terms of biological role, catalyzes the transfer of a methyl group from 5-methyltetrahydrofolate to homocysteine resulting in methionine formation. This Campylobacter jejuni subsp. jejuni serotype O:2 (strain ATCC 700819 / NCTC 11168) protein is 5-methyltetrahydropteroyltriglutamate--homocysteine methyltransferase.